We begin with the raw amino-acid sequence, 25 residues long: SVYYGSIEAGGTKFVLAIADEHFNI.

Belongs to the ROK (NagC/XylR) family. As to quaternary structure, homodimer. Mg(2+) is required as a cofactor.

It catalyses the reaction D-fructose + ATP = D-fructose 6-phosphate + ADP + H(+). Its activity is regulated as follows. Inhibition by zinc ions (Potential). Inactivated by EDTA. The protein is Fructokinase-1 of Lactococcus lactis subsp. lactis (Streptococcus lactis).